A 291-amino-acid polypeptide reads, in one-letter code: D-alanyl-D-alanine carboxypeptidase (291 aa).

An N-terminal signal peptide occupies residues 1 to 29 (MRLRRAAATVITTGALLAAGTLGATPATA). Ser64 acts as the Acyl-ester intermediate in catalysis. Lys67 acts as the Proton acceptor in catalysis. Ser125 is a catalytic residue. Position 242 (Lys242) interacts with substrate.

This sequence belongs to the peptidase S11 family.

It localises to the secreted. It catalyses the reaction Preferential cleavage: (Ac)2-L-Lys-D-Ala-|-D-Ala. Also transpeptidation of peptidyl-alanyl moieties that are N-acyl substituents of D-alanine.. Its pathway is cell wall biogenesis; peptidoglycan biosynthesis. Functionally, removes C-terminal D-alanyl residues from sugar-peptide cell wall precursors. In Streptomyces sp. (strain K15), this protein is D-alanyl-D-alanine carboxypeptidase.